Here is a 157-residue protein sequence, read N- to C-terminus: Ubiquitin-like protein 4A (157 aa).

The 76-residue stretch at Met-1–Lys-76 folds into the Ubiquitin-like domain. Residue Lys-48 forms a Glycyl lysine isopeptide (Lys-Gly) (interchain with G-Cter in ubiquitin) linkage. The residue at position 90 (Ser-90) is a Phosphoserine. A required and sufficient for interaction with BAG6 region spans residues Trp-96 to Leu-138.

In terms of assembly, component of the BAG6/BAT3 complex, at least composed of BAG6, UBL4A and GET4/TRC35. Interacts with BAG6; the interaction is direct and required for UBL4A protein stability. Interacts with USP13; may be indirect via BAG6. Polyubiquitinated. Ubiquitination by AMFR and deubiquitination by USP13 may regulate the interaction between the BAG6/BAT complex and SGTA and therefore may regulate client proteins fate.

The protein resides in the cytoplasm. The protein localises to the cytosol. Its subcellular location is the nucleus. Functionally, as part of a cytosolic protein quality control complex, the BAG6/BAT3 complex, maintains misfolded and hydrophobic patches-containing proteins in a soluble state and participates in their proper delivery to the endoplasmic reticulum or alternatively can promote their sorting to the proteasome where they undergo degradation. The BAG6/BAT3 complex is involved in the post-translational delivery of tail-anchored/type II transmembrane proteins to the endoplasmic reticulum membrane. Recruited to ribosomes, it interacts with the transmembrane region of newly synthesized tail-anchored proteins and together with SGTA and ASNA1 mediates their delivery to the endoplasmic reticulum. Client proteins that cannot be properly delivered to the endoplasmic reticulum are ubiquitinated and sorted to the proteasome. Similarly, the BAG6/BAT3 complex also functions as a sorting platform for proteins of the secretory pathway that are mislocalized to the cytosol either delivering them to the proteasome for degradation or to the endoplasmic reticulum. The BAG6/BAT3 complex also plays a role in the endoplasmic reticulum-associated degradation (ERAD), a quality control mechanism that eliminates unwanted proteins of the endoplasmic reticulum through their retrotranslocation to the cytosol and their targeting to the proteasome. It maintains these retrotranslocated proteins in an unfolded yet soluble state condition in the cytosol to ensure their proper delivery to the proteasome. This is Ubiquitin-like protein 4A (Ubl4a) from Rattus norvegicus (Rat).